The primary structure comprises 438 residues: Adenosylhomocysteinase (438 aa).

Substrate contacts are provided by Thr-61, Asp-137, and Glu-162. 163–165 (TTT) provides a ligand contact to NAD(+). Substrate is bound by residues Lys-192 and Asp-196. Residues Asn-197, 226–231 (GYGDVG), Glu-249, Asn-284, 305–307 (IGH), and Asn-352 each bind NAD(+).

The protein belongs to the adenosylhomocysteinase family. NAD(+) is required as a cofactor.

The protein localises to the cytoplasm. It carries out the reaction S-adenosyl-L-homocysteine + H2O = L-homocysteine + adenosine. Its pathway is amino-acid biosynthesis; L-homocysteine biosynthesis; L-homocysteine from S-adenosyl-L-homocysteine: step 1/1. In terms of biological role, may play a key role in the regulation of the intracellular concentration of adenosylhomocysteine. This is Adenosylhomocysteinase from Christiangramia forsetii (strain DSM 17595 / CGMCC 1.15422 / KT0803) (Gramella forsetii).